A 472-amino-acid chain; its full sequence is N(6)-adenine-specific methyltransferase METTL4 (472 aa).

This sequence belongs to the MT-A70-like family.

Its subcellular location is the nucleus. It is found in the cytoplasm. It localises to the cytosol. The protein resides in the mitochondrion matrix. It carries out the reaction a 2'-O-methyladenosine in U2 snRNA + S-adenosyl-L-methionine = an N(6)-methyl-2'-O-methyladenosine in U2 snRNA + S-adenosyl-L-homocysteine + H(+). The catalysed reaction is a 2'-deoxyadenosine in DNA + S-adenosyl-L-methionine = an N(6)-methyl-2'-deoxyadenosine in DNA + S-adenosyl-L-homocysteine + H(+). Its function is as follows. N(6)-adenine-specific methyltransferase that can methylate both RNAs and DNA. Acts as a N(6)-adenine-specific RNA methyltransferase by catalyzing formation of N6,2'-O-dimethyladenosine (m6A(m)) on internal positions of U2 small nuclear RNA (snRNA): methylates the 6th position of adenine residues with a pre-deposited 2'-O-methylation. Internal m6A(m) methylation of snRNAs regulates RNA splicing. Also able to act as a N(6)-adenine-specific DNA methyltransferase by mediating methylation of DNA on the 6th position of adenine (N(6)-methyladenosine). The existence of N(6)-methyladenosine (m6A) on DNA is however unclear in mammals, and additional evidences are required to confirm the role of the N(6)-adenine-specific DNA methyltransferase activity of METTL4 in vivo. Acts as a regulator of mitochondrial transcript levels and mitochondrial DNA (mtDNA) copy number by mediating mtDNA N(6)-methylation: m6A on mtDNA reduces transcription by repressing TFAM DNA-binding and bending. N(6)-methyladenosine deposition by METTL4 regulates Polycomb silencing by triggering ubiquitination and degradation of sensor proteins ASXL1 and MPND, leading to inactivation of the PR-DUB complex and subsequent preservation of Polycomb silencing. The polypeptide is N(6)-adenine-specific methyltransferase METTL4 (Homo sapiens (Human)).